A 447-amino-acid polypeptide reads, in one-letter code: UPF0210 protein LBUL_0934 (447 aa).

The protein belongs to the UPF0210 family. Homodimer.

This chain is UPF0210 protein LBUL_0934, found in Lactobacillus delbrueckii subsp. bulgaricus (strain ATCC BAA-365 / Lb-18).